The primary structure comprises 218 residues: Probable transaldolase (218 aa).

Residue K83 is the Schiff-base intermediate with substrate of the active site.

Belongs to the transaldolase family. Type 3B subfamily.

The protein resides in the cytoplasm. It catalyses the reaction D-sedoheptulose 7-phosphate + D-glyceraldehyde 3-phosphate = D-erythrose 4-phosphate + beta-D-fructose 6-phosphate. The protein operates within carbohydrate degradation; pentose phosphate pathway; D-glyceraldehyde 3-phosphate and beta-D-fructose 6-phosphate from D-ribose 5-phosphate and D-xylulose 5-phosphate (non-oxidative stage): step 2/3. Functionally, transaldolase is important for the balance of metabolites in the pentose-phosphate pathway. This Parvibaculum lavamentivorans (strain DS-1 / DSM 13023 / NCIMB 13966) protein is Probable transaldolase.